A 366-amino-acid polypeptide reads, in one-letter code: Chorismate synthase (366 aa).

2 residues coordinate NADP(+): Arg48 and Arg54. FMN contacts are provided by residues Arg125 to Ser127, Asn238 to Ala239, Gly278, Lys293 to Ser297, and Arg319.

This sequence belongs to the chorismate synthase family. In terms of assembly, homotetramer. Requires FMNH2 as cofactor.

The catalysed reaction is 5-O-(1-carboxyvinyl)-3-phosphoshikimate = chorismate + phosphate. Its pathway is metabolic intermediate biosynthesis; chorismate biosynthesis; chorismate from D-erythrose 4-phosphate and phosphoenolpyruvate: step 7/7. In terms of biological role, catalyzes the anti-1,4-elimination of the C-3 phosphate and the C-6 proR hydrogen from 5-enolpyruvylshikimate-3-phosphate (EPSP) to yield chorismate, which is the branch point compound that serves as the starting substrate for the three terminal pathways of aromatic amino acid biosynthesis. This reaction introduces a second double bond into the aromatic ring system. In Pseudoalteromonas atlantica (strain T6c / ATCC BAA-1087), this protein is Chorismate synthase.